A 500-amino-acid chain; its full sequence is Cytochrome P450 monooxygenase ausR (500 aa).

Residues 15 to 35 form a helical membrane-spanning segment; that stretch reads GVGLYILWTVAVLFVIFKLLA. Cys439 lines the heme pocket.

This sequence belongs to the cytochrome P450 family. Heme is required as a cofactor.

The protein localises to the membrane. The protein operates within secondary metabolite biosynthesis; terpenoid biosynthesis. Its function is as follows. Cytochrome P450 monooxygenase; part of the gene cluster that mediates the biosynthesis of calidodehydroaustin, a fungal meroterpenoid. The first step of the pathway is the synthesis of 3,5-dimethylorsellinic acid by the polyketide synthase ausA. 3,5-dimethylorsellinic acid is then prenylated by the polyprenyl transferase ausN. Further epoxidation by the FAD-dependent monooxygenase ausM and cyclization by the probable terpene cyclase ausL lead to the formation of protoaustinoid A. Protoaustinoid A is then oxidized to spiro-lactone preaustinoid A3 by the combined action of the FAD-binding monooxygenases ausB and ausC, and the dioxygenase ausE. Acid-catalyzed keto-rearrangement and ring contraction of the tetraketide portion of preaustinoid A3 by ausJ lead to the formation of preaustinoid A4. The aldo-keto reductase ausK, with the help of ausH, is involved in the next step by transforming preaustinoid A4 into isoaustinone which is in turn hydroxylated by the P450 monooxygenase ausI to form austinolide. The cytochrome P450 monooxygenase ausG modifies austinolide to austinol. Austinol is further acetylated to austin by the O-acetyltransferase ausP, which spontaneously changes to dehydroaustin. The cytochrome P450 monooxygenase ausR then converts dehydroaustin is into 7-dehydrodehydroaustin. The hydroxylation catalyzed by ausR permits the O-acetyltransferase ausQ to add an additional acetyl group to the molecule, leading to the formation of acetoxydehydroaustin. The short chain dehydrogenase ausT catalyzes the reduction of the double bond present between carbon atoms 1 and 2 to convert 7-dehydrodehydroaustin into 1,2-dihydro-7-hydroxydehydroaustin. AusQ catalyzes not only an acetylation reaction but also the addition of the PKS ausV diketide product to 1,2-dihydro-7-hydroxydehydroaustin, forming precalidodehydroaustin. Finally, the iron/alpha-ketoglutarate-dependent dioxygenase converts precalidodehydroaustin into calidodehydroaustin. This is Cytochrome P450 monooxygenase ausR from Aspergillus calidoustus.